Here is a 557-residue protein sequence, read N- to C-terminus: Carotenoid-cleaving dioxygenase, mitochondrial (557 aa).

Fe cation is bound by residues His-203, His-263, His-334, and His-551.

It belongs to the carotenoid oxygenase family. The cofactor is Fe(2+).

It localises to the mitochondrion. The catalysed reaction is all-trans-beta-carotene + O2 = beta-ionone + all-trans-10'-apo-beta-carotenal. The enzyme catalyses 5-cis-lycopene + O2 = 5-cis-10'-apo-lycopenal + (3E,5E)-6,10-dimethylundeca-3,5,9-trien-2-one. It catalyses the reaction 13-cis-lycopene + O2 = 13-cis-10'-apo-lycopenal + (3E,5E)-6,10-dimethylundeca-3,5,9-trien-2-one. It carries out the reaction lutein + O2 = (3R,6R)-hydroxy-alpha-ionone + (3R)-3-hydroxy-10'-apo-beta-carotenal. The catalysed reaction is lutein + O2 = (3R,6R)-3-hydroxy-10'-apo-alpha-carotenal + (3R)-hydroxy-beta-ionone. The enzyme catalyses all-trans-zeaxanthin + 2 O2 = 4,9-dimethyldodeca-2,4,6,8,10-pentaenedial + 2 (3R)-hydroxy-beta-ionone. It catalyses the reaction all-trans-zeaxanthin + O2 = (3R)-3-hydroxy-10'-apo-beta-carotenal + (3R)-hydroxy-beta-ionone. It carries out the reaction beta-cryptoxanthin + O2 = all-trans-10'-apo-beta-carotenal + (3R)-hydroxy-beta-ionone. The catalysed reaction is all-trans-10'-apo-beta-carotenal + O2 = beta-ionone + 4,9-dimethyldodeca-2,4,6,8,10-pentaenedial. The enzyme catalyses (3R)-3-hydroxy-10'-apo-beta-carotenal + O2 = 4,9-dimethyldodeca-2,4,6,8,10-pentaenedial + (3R)-hydroxy-beta-ionone. It catalyses the reaction (3R,6R)-3-hydroxy-10'-apo-alpha-carotenal + O2 = (3R,6R)-hydroxy-alpha-ionone + 4,9-dimethyldodeca-2,4,6,8,10-pentaenedial. In terms of biological role, broad specificity mitochondrial dioxygenase that mediates the asymmetric oxidative cleavage of carotenoids. Cleaves carotenes (pure hydrocarbon carotenoids) such as all-trans-beta-carotene and lycopene as well as xanthophylls (oxygenated carotenoids) such as zeaxanthin, lutein and beta-cryptoxanthin at both the 9,10 and the 9',10' carbon-carbon double bond. Through its function in carotenoids metabolism regulates oxidative stress and the production of important signaling molecules. This is Carotenoid-cleaving dioxygenase, mitochondrial from Pongo abelii (Sumatran orangutan).